The chain runs to 399 residues: Ribonuclease D (399 aa).

Residues 31 to 197 enclose the 3'-5' exonuclease domain; sequence RVVTDNTALL…PLYHILEKEL (167 aa). The region spanning 239–318 is the HRDC domain; that stretch reads NPLELSRLRV…SQARRISSND (80 aa).

The protein belongs to the RNase D family. A divalent metal cation serves as cofactor.

The protein resides in the cytoplasm. The catalysed reaction is Exonucleolytic cleavage that removes extra residues from the 3'-terminus of tRNA to produce 5'-mononucleotides.. Its function is as follows. Exonuclease involved in the 3' processing of various precursor tRNAs. Initiates hydrolysis at the 3'-terminus of an RNA molecule and releases 5'-mononucleotides. This Haemophilus influenzae (strain ATCC 51907 / DSM 11121 / KW20 / Rd) protein is Ribonuclease D.